Reading from the N-terminus, the 198-residue chain is ATP-dependent Clp protease proteolytic subunit 1 (198 aa).

Ser-98 (nucleophile) is an active-site residue. His-123 is an active-site residue.

This sequence belongs to the peptidase S14 family. In terms of assembly, fourteen ClpP subunits assemble into 2 heptameric rings which stack back to back to give a disk-like structure with a central cavity, resembling the structure of eukaryotic proteasomes.

It localises to the cytoplasm. It catalyses the reaction Hydrolysis of proteins to small peptides in the presence of ATP and magnesium. alpha-casein is the usual test substrate. In the absence of ATP, only oligopeptides shorter than five residues are hydrolyzed (such as succinyl-Leu-Tyr-|-NHMec, and Leu-Tyr-Leu-|-Tyr-Trp, in which cleavage of the -Tyr-|-Leu- and -Tyr-|-Trp bonds also occurs).. In terms of biological role, cleaves peptides in various proteins in a process that requires ATP hydrolysis. Has a chymotrypsin-like activity. Plays a major role in the degradation of misfolded proteins. In Leptospira interrogans serogroup Icterohaemorrhagiae serovar copenhageni (strain Fiocruz L1-130), this protein is ATP-dependent Clp protease proteolytic subunit 1.